The primary structure comprises 291 residues: Glutathione S-transferase 2 (291 aa).

One can recognise a GST N-terminal domain in the interval serine 2–alanine 83. Glutathione is bound by residues histidine 41–lysine 42, lysine 54–methionine 55, and lysine 67–serine 68. The 131-residue stretch at glycine 93–phenylalanine 223 folds into the GST C-terminal domain.

It belongs to the GST superfamily. Phi family.

The catalysed reaction is RX + glutathione = an S-substituted glutathione + a halide anion + H(+). Conjugation of reduced glutathione to a wide number of exogenous and endogenous hydrophobic electrophiles. This chain is Glutathione S-transferase 2 (GSTA2), found in Triticum aestivum (Wheat).